The chain runs to 78 residues: MKTLLLTLVVVTIVCLDFGYTIVCYKRHASDSQTTTCLSGICYKKITRGSSRPEMGCGCPQSSRGVKVDCCMRDKCNG.

The N-terminal stretch at 1 to 21 (MKTLLLTLVVVTIVCLDFGYT) is a signal peptide. 4 disulfides stabilise this stretch: C24–C42, C37–C57, C59–C70, and C71–C76.

The protein belongs to the three-finger toxin family. Short-chain subfamily. Orphan group XII sub-subfamily. As to expression, expressed by the venom gland.

The protein resides in the secreted. This is Alpha-neurotoxin homolog 7 from Micrurus corallinus (Brazilian coral snake).